The primary structure comprises 270 residues: Putative phosphoenolpyruvate synthase regulatory protein (270 aa).

150 to 157 (GVSRCGKT) contacts ADP.

Belongs to the pyruvate, phosphate/water dikinase regulatory protein family. PSRP subfamily.

The catalysed reaction is [pyruvate, water dikinase] + ADP = [pyruvate, water dikinase]-phosphate + AMP + H(+). It catalyses the reaction [pyruvate, water dikinase]-phosphate + phosphate + H(+) = [pyruvate, water dikinase] + diphosphate. Its function is as follows. Bifunctional serine/threonine kinase and phosphorylase involved in the regulation of the phosphoenolpyruvate synthase (PEPS) by catalyzing its phosphorylation/dephosphorylation. The chain is Putative phosphoenolpyruvate synthase regulatory protein from Shewanella piezotolerans (strain WP3 / JCM 13877).